The primary structure comprises 279 residues: 3-methyl-2-oxobutanoate hydroxymethyltransferase 2 (279 aa).

Mg(2+) contacts are provided by Asp-58 and Asp-97. 3-methyl-2-oxobutanoate-binding positions include 58 to 59 (DS), Asp-97, and Lys-126. Glu-128 lines the Mg(2+) pocket. Glu-195 serves as the catalytic Proton acceptor.

It belongs to the PanB family. As to quaternary structure, homodecamer; pentamer of dimers. Mg(2+) is required as a cofactor.

The protein localises to the cytoplasm. The enzyme catalyses 3-methyl-2-oxobutanoate + (6R)-5,10-methylene-5,6,7,8-tetrahydrofolate + H2O = 2-dehydropantoate + (6S)-5,6,7,8-tetrahydrofolate. It participates in cofactor biosynthesis; (R)-pantothenate biosynthesis; (R)-pantoate from 3-methyl-2-oxobutanoate: step 1/2. Catalyzes the reversible reaction in which hydroxymethyl group from 5,10-methylenetetrahydrofolate is transferred onto alpha-ketoisovalerate to form ketopantoate. In Methylibium petroleiphilum (strain ATCC BAA-1232 / LMG 22953 / PM1), this protein is 3-methyl-2-oxobutanoate hydroxymethyltransferase 2.